We begin with the raw amino-acid sequence, 287 residues long: Fructose-1,6-bisphosphatase class 1 (287 aa).

Glutamate 67, aspartate 86, leucine 88, and aspartate 89 together coordinate Mg(2+). Residues 89-92 (DGSS), tyrosine 195, and lysine 226 each bind substrate. Glutamate 232 contacts Mg(2+).

It belongs to the FBPase class 1 family. As to quaternary structure, homotetramer. Mg(2+) is required as a cofactor.

It is found in the cytoplasm. The enzyme catalyses beta-D-fructose 1,6-bisphosphate + H2O = beta-D-fructose 6-phosphate + phosphate. Its pathway is carbohydrate biosynthesis; gluconeogenesis. In Campylobacter concisus (strain 13826), this protein is Fructose-1,6-bisphosphatase class 1.